Reading from the N-terminus, the 277-residue chain is Thiamine thiazole synthase (277 aa).

NAD(+) is bound by residues Ser36, Gly63, Val126, and His152–Asp154. The Fe cation site is built by Asp154 and His169. Met230 serves as a coordination point for NAD(+). Arg240 contacts glycine.

Belongs to the THI4 family. In terms of assembly, homooctamer; tetramer of dimers. The cofactor is Fe(2+).

The enzyme catalyses hydrogen sulfide + glycine + NAD(+) = ADP-5-ethyl-4-methylthiazole-2-carboxylate + nicotinamide + 3 H2O + H(+). It participates in cofactor biosynthesis; thiamine diphosphate biosynthesis. Its function is as follows. Involved in the biosynthesis of the thiazole moiety of thiamine. Catalyzes the conversion of NAD and glycine to adenosine diphosphate 5-(2-hydroxyethyl)-4-methylthiazole-2-carboxylate (ADT), an adenylated thiazole intermediate, using free sulfide as a source of sulfur. In Fervidobacterium nodosum (strain ATCC 35602 / DSM 5306 / Rt17-B1), this protein is Thiamine thiazole synthase.